A 385-amino-acid polypeptide reads, in one-letter code: m7GpppN-mRNA hydrolase (385 aa).

The 132-residue stretch at 95 to 226 folds into the Nudix hydrolase domain; that stretch reads MGVPTYGAII…KLGLAPNKFF (132 aa). The Nudix box motif lies at 129–150; it reads GKVNKEEAPHDCAAREVFEETG. Positions 144 and 148 each coordinate Mn(2+). Residues serine 246, serine 247, serine 249, serine 276, and serine 284 each carry the phosphoserine modification. The segment at 247–266 is disordered; the sequence is SDSDNGFSSTGSTPAKPTVE. The segment covering 249–259 has biased composition (low complexity); sequence SDNGFSSTGST.

Belongs to the Nudix hydrolase family. DCP2 subfamily. In terms of assembly, found in a mRNA decay complex with LSM1, LSM3, LSM4, EXOSC2, EXOSC4, EXOSC10, PARN, XRN1, CNOT6, UPF1, UPF2 and UPF3B. Forms a complex with DCP1A, EDC3, DDX6 and EDC4/HEDLS, within this complex directly interacts with EDC4/HEDLS. Interacts with DPC1B, UPF1, UPF2 and UPF3B. Associates with polysomes. Interacts (via N-terminus and C-terminus) with TRIM21 (via N-terminus and C-terminus). Interacts with LIMD1, WTIP and AJUBA. Interacts with DDX17 in an RNA-dependent manner. Interacts with ZC3HAV1. Interacts with APOBEC3G in an RNA-dependent manner. Interacts with ZFP36L1 (via N-terminus). Interacts with NBDY. The cofactor is Mn(2+). It depends on Mg(2+) as a cofactor.

Its subcellular location is the cytoplasm. The protein localises to the P-body. It is found in the nucleus. The enzyme catalyses a 5'-end (N(7)-methyl 5'-triphosphoguanosine)-ribonucleoside in mRNA + H2O = N(7)-methyl-GDP + a 5'-end phospho-ribonucleoside in mRNA + 2 H(+). Decapping metalloenzyme that catalyzes the cleavage of the cap structure on mRNAs. Removes the 7-methyl guanine cap structure from mRNA molecules, yielding a 5'-phosphorylated mRNA fragment and 7m-GDP. Necessary for the degradation of mRNAs, both in normal mRNA turnover and in nonsense-mediated mRNA decay. Plays a role in replication-dependent histone mRNA degradation. Has higher activity towards mRNAs that lack a poly(A) tail. Has no activity towards a cap structure lacking an RNA moiety. The presence of a N(6)-methyladenosine methylation at the second transcribed position of mRNAs (N(6),2'-O-dimethyladenosine cap; m6A(m)) provides resistance to DCP2-mediated decapping. Blocks autophagy in nutrient-rich conditions by repressing the expression of ATG-related genes through degradation of their transcripts. The polypeptide is m7GpppN-mRNA hydrolase (DCP2) (Pongo abelii (Sumatran orangutan)).